The chain runs to 479 residues: Anaerobic nitric oxide reductase flavorubredoxin (479 aa).

The segment at 30 to 210 (LRGSSYNSYL…PFSRLVTPKI (181 aa)) is zinc metallo-hydrolase. Fe cation contacts are provided by His-79, Glu-81, Asp-83, His-147, Asp-166, and His-227. The Flavodoxin-like domain occupies 254 to 393 (ITIFYDTMSN…LCREHGREIA (140 aa)). FMN is bound by residues 260 to 264 (TMSNN) and 342 to 369 (AFGS…EMSL). The region spanning 423 to 474 (GPRMQCSVCQWIYDPAKGEPMQDVAPGTPWSEVPDNFLCPECSLGKDVFDEL) is the Rubredoxin-like domain. Fe cation-binding residues include Cys-428, Cys-431, Cys-461, and Cys-464.

It in the N-terminal section; belongs to the zinc metallo-hydrolase group 3 family. Homotetramer. The cofactor is Fe cation. FMN is required as a cofactor.

The protein resides in the cytoplasm. The protein operates within nitrogen metabolism; nitric oxide reduction. In terms of biological role, anaerobic nitric oxide reductase; uses NADH to detoxify nitric oxide (NO), protecting several 4Fe-4S NO-sensitive enzymes. Has at least 2 reductase partners, only one of which (NorW, flavorubredoxin reductase) has been identified. NO probably binds to the di-iron center; electrons enter from the NorW at rubredoxin and are transferred sequentially to the FMN center and the di-iron center. Also able to function as an aerobic oxygen reductase. This is Anaerobic nitric oxide reductase flavorubredoxin from Shigella flexneri serotype 5b (strain 8401).